The chain runs to 604 residues: Sulfite reductase [NADPH] flavoprotein alpha-component (604 aa).

Positions 66–204 (VTVLSASQTG…AANAWTDNIA (139 aa)) constitute a Flavodoxin-like domain. FMN is bound by residues 72–77 (SQTGNA), 119–122 (STQG), and 155–164 (LGDSSYPNFC). Positions 239–453 (ADPFPAALLA…VERNDGFRLP (215 aa)) constitute an FAD-binding FR-type domain. FAD contacts are provided by residues Thr-327, Gln-361, 391–394 (RLYS), 409–411 (TVG), and 424–427 (GGAS). NADP(+)-binding positions include 524–525 (SR), 530–534 (KIYVQ), and Asp-566. Residue Tyr-604 participates in FAD binding.

Belongs to the NADPH-dependent sulphite reductase flavoprotein subunit CysJ family. This sequence in the N-terminal section; belongs to the flavodoxin family. The protein in the C-terminal section; belongs to the flavoprotein pyridine nucleotide cytochrome reductase family. Alpha(8)-beta(8). The alpha component is a flavoprotein, the beta component is a hemoprotein. FAD serves as cofactor. It depends on FMN as a cofactor.

It carries out the reaction hydrogen sulfide + 3 NADP(+) + 3 H2O = sulfite + 3 NADPH + 4 H(+). The protein operates within sulfur metabolism; hydrogen sulfide biosynthesis; hydrogen sulfide from sulfite (NADPH route): step 1/1. Functionally, component of the sulfite reductase complex that catalyzes the 6-electron reduction of sulfite to sulfide. This is one of several activities required for the biosynthesis of L-cysteine from sulfate. The flavoprotein component catalyzes the electron flow from NADPH -&gt; FAD -&gt; FMN to the hemoprotein component. In Neisseria meningitidis serogroup C (strain 053442), this protein is Sulfite reductase [NADPH] flavoprotein alpha-component.